A 157-amino-acid chain; its full sequence is MAKGEFRLCDVVLDDTIGRSTPDVEHERAVAIFDLIEENRFEPLGHAGGPYRLNISLVDSKLVFAITTEEGGGVATHILSLTPFRRIVKDYFMICESYYEAIRSSTPSRIEAIDMGRRGIHNEGSQTLKDRLAGKIEVDFDTARRLFTLVCVLYWRG.

The protein belongs to the UPF0262 family.

This Rhizobium johnstonii (strain DSM 114642 / LMG 32736 / 3841) (Rhizobium leguminosarum bv. viciae) protein is UPF0262 protein RL0614.